A 775-amino-acid polypeptide reads, in one-letter code: GRIP and coiled-coil domain-containing protein 1 (775 aa).

Residues 13–61 (SKKDLLETIETQKKQLLQYQARLKDVVRAYKSLLKEKEALEASIKVLSV) adopt a coiled-coil conformation. The span at 84–93 (DDRCSTHSED) shows a compositional bias: basic and acidic residues. 2 disordered regions span residues 84–153 (DDRC…AGGE) and 614–639 (GLPGRRSPVGGGGPGDPADTSSSDSL). Composition is skewed to low complexity over residues 94-110 (STGTATSLDTAASLTST), 133-147 (ASWSESGVSSSSGDG), and 629-638 (DPADTSSSDS). The stretch at 153–763 (EVDKRLHQLK…PEEKQVIMRL (611 aa)) forms a coiled coil. The GRIP domain maps to 713-763 (QSREGANLEYLKNIIYRFLTLPDSLGRQQTLTAILTILHFSPEEKQVIMRL).

It is found in the cytoplasm. Its subcellular location is the golgi apparatus membrane. Functionally, probably involved in maintaining Golgi structure. This is GRIP and coiled-coil domain-containing protein 1 (GCC1) from Homo sapiens (Human).